Here is a 782-residue protein sequence, read N- to C-terminus: Translation initiation factor IF-2 (782 aa).

Residues 47–196 are disordered; sequence DNAIDGTNKK…TPPKPKELPE (150 aa). Residues 53-65 show a composition bias toward basic and acidic residues; that stretch reads TNKKAEAPKKETT. A compositionally biased stretch (polar residues) spans 66–81; sequence SNENGNSKGPNKPNMT. The span at 82-93 shows a compositional bias: low complexity; the sequence is NSNEKSNKPNKP. Over residues 115–129 the composition is skewed to polar residues; that stretch reads KPANTSNQTQSSGNK. The segment covering 133-170 has biased composition (low complexity); it reads GGQKRNNNNNSNRPGGGNPNRPGGNNRPNRGGNFNNKG. A tr-type G domain is found at 283-452; that stretch reads ERPPVVTIMG…LLVSEVEELK (170 aa). Residues 292–299 are G1; that stretch reads GHVDHGKT. A GTP-binding site is contributed by 292-299; the sequence is GHVDHGKT. A G2 region spans residues 317-321; the sequence is GITQH. The tract at residues 338 to 341 is G3; the sequence is DTPG. GTP is bound by residues 338-342 and 392-395; these read DTPGH and NKID. Positions 392–395 are G4; sequence NKID. The interval 428 to 430 is G5; it reads SAK.

Belongs to the TRAFAC class translation factor GTPase superfamily. Classic translation factor GTPase family. IF-2 subfamily.

The protein localises to the cytoplasm. Its function is as follows. One of the essential components for the initiation of protein synthesis. Protects formylmethionyl-tRNA from spontaneous hydrolysis and promotes its binding to the 30S ribosomal subunits. Also involved in the hydrolysis of GTP during the formation of the 70S ribosomal complex. The protein is Translation initiation factor IF-2 of Listeria innocua serovar 6a (strain ATCC BAA-680 / CLIP 11262).